Here is a 153-residue protein sequence, read N- to C-terminus: Fucose mutarotase (153 aa).

H24 acts as the Proton donor in catalysis. D32 lines the substrate pocket. Residue D69 is part of the active site. The substrate site is built by M79, Y119, Y137, and N139. Residue Y119 is part of the active site.

This sequence belongs to the RbsD / FucU family. In terms of assembly, mainly homodimer, but also exists as homotetramer, homooctamer, and homodecamer. The homodimeric form seems catalytically inactive.

It catalyses the reaction alpha-L-fucose = beta-L-fucose. It participates in carbohydrate metabolism; L-fucose metabolism. Functionally, involved in the interconversion between alpha- and beta-L-fucoses. L-Fucose (6-deoxy-L-galactose) exists as alpha-L-fucose (29.5%) and beta-L-fucose (70.5%), the beta-form is metabolized through the salvage pathway. GDP-L-fucose formed either by the de novo or salvage pathways is transported into the endoplasmic reticulum, where it serves as a substrate for N- and O-glycosylations by fucosyltransferases. Fucosylated structures expressed on cell surfaces or secreted in biological fluids are believed to play a critical role in cell-cell adhesion and recognition processes. The sequence is that of Fucose mutarotase (FUOM) from Bos taurus (Bovine).